A 242-amino-acid polypeptide reads, in one-letter code: Cytochrome c oxidase subunit 2 (242 aa).

Residues 7 to 33 lie on the Mitochondrial intermembrane side of the membrane; sequence DVPVPYGLYFQDSATPTFDGIIELHDI. Residues 34–55 traverse the membrane as a helical segment; sequence VMFYIVVTIVLVSYLLFVIIKN. Over 56–73 the chain is Mitochondrial matrix; it reads FSNDHISYKYLTHGTTLE. Residues 74 to 98 traverse the membrane as a helical segment; sequence IVWTIFPVVILLFIAFPSFILLYLC. Over 99 to 242 the chain is Mitochondrial intermembrane; sequence DEVIDPAMTI…DKFLSWLDEQ (144 aa). Cu cation is bound by residues His177, Cys212, Glu214, Cys216, His220, and Met223. Glu214 provides a ligand contact to Mg(2+).

It belongs to the cytochrome c oxidase subunit 2 family. As to quaternary structure, component of the cytochrome c oxidase (complex IV, CIV), a multisubunit enzyme composed of a catalytic core of 3 subunits and several supernumerary subunits. The complex exists as a monomer or a dimer and forms supercomplexes (SCs) in the inner mitochondrial membrane with ubiquinol-cytochrome c oxidoreductase (cytochrome b-c1 complex, complex III, CIII). It depends on Cu cation as a cofactor. The signal sequence of COX2 is processed by IMP1.

Its subcellular location is the mitochondrion inner membrane. The enzyme catalyses 4 Fe(II)-[cytochrome c] + O2 + 8 H(+)(in) = 4 Fe(III)-[cytochrome c] + 2 H2O + 4 H(+)(out). Component of the cytochrome c oxidase, the last enzyme in the mitochondrial electron transport chain which drives oxidative phosphorylation. The respiratory chain contains 3 multisubunit complexes succinate dehydrogenase (complex II, CII), ubiquinol-cytochrome c oxidoreductase (cytochrome b-c1 complex, complex III, CIII) and cytochrome c oxidase (complex IV, CIV), that cooperate to transfer electrons derived from NADH and succinate to molecular oxygen, creating an electrochemical gradient over the inner membrane that drives transmembrane transport and the ATP synthase. Cytochrome c oxidase is the component of the respiratory chain that catalyzes the reduction of oxygen to water. Electrons originating from reduced cytochrome c in the intermembrane space (IMS) are transferred via the dinuclear copper A center (CU(A)) of subunit 2 and heme A of subunit 1 to the active site in subunit 1, a binuclear center (BNC) formed by heme A3 and copper B (CU(B)). The BNC reduces molecular oxygen to 2 water molecules using 4 electrons from cytochrome c in the IMS and 4 protons from the mitochondrial matrix. The chain is Cytochrome c oxidase subunit 2 (COX2) from Yarrowia lipolytica (strain CLIB 122 / E 150) (Yeast).